The primary structure comprises 451 residues: Probable gamma-glutamyl phosphate reductase (451 aa).

The protein belongs to the gamma-glutamyl phosphate reductase family.

It catalyses the reaction L-glutamate 5-semialdehyde + phosphate + NADP(+) = L-glutamyl 5-phosphate + NADPH + H(+). It participates in amino-acid biosynthesis; L-proline biosynthesis; L-glutamate 5-semialdehyde from L-glutamate: step 2/2. In terms of biological role, catalyzes the NADPH dependent reduction of L-gamma-glutamyl 5-phosphate into L-glutamate 5-semialdehyde and phosphate. The product spontaneously undergoes cyclization to form 1-pyrroline-5-carboxylate. The chain is Probable gamma-glutamyl phosphate reductase (pro1) from Schizosaccharomyces pombe (strain 972 / ATCC 24843) (Fission yeast).